A 41-amino-acid polypeptide reads, in one-letter code: Cytochrome b559 subunit beta (41 aa).

Residues 16 to 32 (WLAVHALAIPTVFFLGS) form a helical membrane-spanning segment. His20 is a heme binding site.

It belongs to the PsbE/PsbF family. As to quaternary structure, heterodimer of an alpha subunit and a beta subunit. PSII is composed of 1 copy each of membrane proteins PsbA, PsbB, PsbC, PsbD, PsbE, PsbF, PsbH, PsbI, PsbJ, PsbK, PsbL, PsbM, PsbT, PsbY, PsbZ, Psb30/Ycf12, at least 3 peripheral proteins of the oxygen-evolving complex and a large number of cofactors. It forms dimeric complexes. Heme b serves as cofactor.

Its subcellular location is the plastid. The protein resides in the chloroplast thylakoid membrane. This b-type cytochrome is tightly associated with the reaction center of photosystem II (PSII). PSII is a light-driven water:plastoquinone oxidoreductase that uses light energy to abstract electrons from H(2)O, generating O(2) and a proton gradient subsequently used for ATP formation. It consists of a core antenna complex that captures photons, and an electron transfer chain that converts photonic excitation into a charge separation. The protein is Cytochrome b559 subunit beta of Euglena gracilis.